A 264-amino-acid chain; its full sequence is Putative hydro-lyase cgR_2449 (264 aa).

This sequence belongs to the D-glutamate cyclase family.

The protein is Putative hydro-lyase cgR_2449 of Corynebacterium glutamicum (strain R).